The sequence spans 550 residues: Chaperonin GroEL (550 aa).

ATP contacts are provided by residues 30–33 (TLGP), K51, 87–91 (DGTTT), G415, 479–481 (NAA), and D495.

Belongs to the chaperonin (HSP60) family. Forms a cylinder of 14 subunits composed of two heptameric rings stacked back-to-back. Interacts with the co-chaperonin GroES.

It localises to the cytoplasm. The catalysed reaction is ATP + H2O + a folded polypeptide = ADP + phosphate + an unfolded polypeptide.. In terms of biological role, together with its co-chaperonin GroES, plays an essential role in assisting protein folding. The GroEL-GroES system forms a nano-cage that allows encapsulation of the non-native substrate proteins and provides a physical environment optimized to promote and accelerate protein folding. This Marinobacter nauticus (strain ATCC 700491 / DSM 11845 / VT8) (Marinobacter aquaeolei) protein is Chaperonin GroEL.